Consider the following 511-residue polypeptide: L-arabinose isomerase (511 aa).

Residues glutamate 316, glutamate 343, histidine 360, and histidine 459 each contribute to the Mn(2+) site.

The protein belongs to the arabinose isomerase family. Requires Mn(2+) as cofactor.

It catalyses the reaction beta-L-arabinopyranose = L-ribulose. The protein operates within carbohydrate degradation; L-arabinose degradation via L-ribulose; D-xylulose 5-phosphate from L-arabinose (bacterial route): step 1/3. Catalyzes the conversion of L-arabinose to L-ribulose. The sequence is that of L-arabinose isomerase from Arthrobacter sp. (strain FB24).